The chain runs to 812 residues: DNA translocase FtsK 1 (812 aa).

The span at 1–11 (MTEKSHKKTAK) shows a compositional bias: basic residues. Positions 1–36 (MTEKSHKKTAKGRAGSPSPTSARNKKADNGARGNKV) are disordered. A compositionally biased stretch (basic and acidic residues) spans 25–36 (KKADNGARGNKV). 5 helical membrane-spanning segments follow: residues 63-83 (IGDALWLMGLAATLYLVISLI), 116-136 (VGYYLFGWSFWWWIAAACVML), 156-176 (IAAAALFVLTVFSPVLEYFVL), 184-204 (LPVGAGGMVGIRVGAVFAWLL), and 210-230 (LLIILVVLLLSLSLLVQISWL). At 231–812 (EFLNGAGRAV…RKILAHKDHL (582 aa)) the chain is on the cytoplasmic side. The FtsK domain occupies 461 to 670 (GTPVVGDLAK…FTVQSKIDSR (210 aa)). Position 481–486 (481–486 (GSGKSV)) interacts with ATP.

It belongs to the FtsK/SpoIIIE/SftA family. As to quaternary structure, homohexamer. Forms a ring that surrounds DNA.

It is found in the cell inner membrane. Its function is as follows. Essential cell division protein that coordinates cell division and chromosome segregation. The N-terminus is involved in assembly of the cell-division machinery. The C-terminus functions as a DNA motor that moves dsDNA in an ATP-dependent manner towards the dif recombination site, which is located within the replication terminus region. Translocation stops specifically at Xer-dif sites, where FtsK interacts with the Xer recombinase, allowing activation of chromosome unlinking by recombination. FtsK orienting polar sequences (KOPS) guide the direction of DNA translocation. FtsK can remove proteins from DNA as it translocates, but translocation stops specifically at XerCD-dif site, thereby preventing removal of XerC and XerD from dif. The sequence is that of DNA translocase FtsK 1 (ftsK1) from Neisseria meningitidis serogroup A / serotype 4A (strain DSM 15465 / Z2491).